A 253-amino-acid polypeptide reads, in one-letter code: Small ribosomal subunit protein uS3 (253 aa).

The KH type-2 domain maps to 39–109 (IRNYVLARLK…EVKIDVVEVI (71 aa)). The segment at 220–253 (DEMKKMKDRRNDGGAKGRDSRDNRSKRRSRSKRS) is disordered. Residues 221 to 242 (EMKKMKDRRNDGGAKGRDSRDN) are compositionally biased toward basic and acidic residues. Residues 243 to 253 (RSKRRSRSKRS) are compositionally biased toward basic residues.

The protein belongs to the universal ribosomal protein uS3 family. Part of the 30S ribosomal subunit. Forms a tight complex with proteins S10 and S14.

Functionally, binds the lower part of the 30S subunit head. Binds mRNA in the 70S ribosome, positioning it for translation. In Chlorobium chlorochromatii (strain CaD3), this protein is Small ribosomal subunit protein uS3.